Here is a 193-residue protein sequence, read N- to C-terminus: Acyl carrier protein phosphodiesterase (193 aa).

Belongs to the AcpH family.

The catalysed reaction is holo-[ACP] + H2O = apo-[ACP] + (R)-4'-phosphopantetheine + H(+). Its function is as follows. Converts holo-ACP to apo-ACP by hydrolytic cleavage of the phosphopantetheine prosthetic group from ACP. The chain is Acyl carrier protein phosphodiesterase from Escherichia coli O157:H7.